Consider the following 706-residue polypeptide: MQLLCVFCLVLLWEVGAASLSEVKLHLDIEGHASHYTIPWTELMAKVPGLSPEALWREANVTEDLASMLNRYKLIYKTSGTLGIALAEPVDIPAVSEGSMQVDASKVHPGVISGLNSPACMLSAPLEKQLFYYIGTMLPNTRPHSYVFYQLRCHLSYVALSINGDKFQYTGAMTSKFLMGTYKRVTEKGDEHVLSLIFGKTKDLPDLRGPFSYPSLTSAQSGDYSLVIVTTFVHYANFHNYFVPNLKDMFSRAVTMTAASYARYVLQKLVLLEMKGGCREPELDTETLTTMFEVSVAFFKVGHAVGETGNGCVDLRWLAKSFFELTVLKDIIGICYGATVKGMQSYGLERLAAMLMATVKMEELGHLTTEKQEYALRLATVGYPKAGVYSGLIGGATSVLLSAYNRHPLFQPLHTVMRETLFIGSHVVLRELRLNVTTQGPNLALYQLLSTALCSALEIGEVLRGLALGTESGLFSPCYLSLRFDLTRDKLLSMAPQEAMLDQAAVSNAVDGFLGRLSLEREDRDAWHLPAYKCVDRLDKVLMIIPLINVTFIISSDREVRGSALYEASTTYLSSSLFLSPVIMNKCSQGAVAGEPRQIPKIQNFTRTQKSCIFCGFALLSYDEKEGLETTTYITSQEVQNSILSSNYFDFDNLHVHYLLLTTNGTVMEIAGLYEERAHVVLAIILYFIAFALGIFLVHKIVMFFL.

Residues 1 to 18 (MQLLCVFCLVLLWEVGAA) form the signal peptide. At 19-682 (SLSEVKLHLD…LYEERAHVVL (664 aa)) the chain is on the virion surface side. Residue Asn-60 is glycosylated (N-linked (GlcNAc...) asparagine; by host). The segment at 165 to 229 (DKFQYTGAMT…QSGDYSLVIV (65 aa)) is interaction with gL. A disulfide bridge connects residues Cys-278 and Cys-335. Residue Asn-435 is glycosylated (N-linked (GlcNAc...) asparagine; by host). 2 disulfides stabilise this stretch: Cys-454–Cys-478 and Cys-534–Cys-587. Asn-549 and Asn-604 each carry an N-linked (GlcNAc...) asparagine; by host glycan. The cysteines at positions 612 and 615 are disulfide-linked. Asn-664 carries N-linked (GlcNAc...) asparagine; by host glycosylation. The chain crosses the membrane as a helical span at residues 683-703 (AIILYFIAFALGIFLVHKIVM). The Intravirion segment spans residues 704–706 (FFL).

It belongs to the herpesviridae glycoprotein H family. As to quaternary structure, interacts with glycoprotein L (gL); this interaction is necessary for the correct processing and cell surface expression of gH. The heterodimer gH/gL seems to interact with gB trimers during fusion. The heterodimer gH/gL interacts with host EPHA2 to facilitate virus internalization and fusion. Interacts with glycoprotein 42/BZLF2. In terms of processing, N-glycosylated, O-glycosylated, and sialylated.

It localises to the virion membrane. The protein resides in the host cell membrane. It is found in the host endosome membrane. The heterodimer glycoprotein H-glycoprotein L is required for the fusion of viral and plasma membranes leading to virus entry into the host cell. Following initial binding to host receptor, membrane fusion is mediated by the fusion machinery composed of gB and the heterodimer gH/gL. May also be involved in the fusion between the virion envelope and the outer nuclear membrane during virion morphogenesis. The heterodimer gH/gL targets also host EPHA2 to promote viral entry. The protein is Envelope glycoprotein H of Homo sapiens (Human).